The chain runs to 164 residues: Putative 4-hydroxy-4-methyl-2-oxoglutarate aldolase (164 aa).

Residues 75-78 and R97 each bind substrate; that span reads GDLI. D98 is a binding site for a divalent metal cation.

The protein belongs to the class II aldolase/RraA-like family. As to quaternary structure, homotrimer. A divalent metal cation serves as cofactor.

It catalyses the reaction 4-hydroxy-4-methyl-2-oxoglutarate = 2 pyruvate. The catalysed reaction is oxaloacetate + H(+) = pyruvate + CO2. Its function is as follows. Catalyzes the aldol cleavage of 4-hydroxy-4-methyl-2-oxoglutarate (HMG) into 2 molecules of pyruvate. Also contains a secondary oxaloacetate (OAA) decarboxylase activity due to the common pyruvate enolate transition state formed following C-C bond cleavage in the retro-aldol and decarboxylation reactions. This Shewanella oneidensis (strain ATCC 700550 / JCM 31522 / CIP 106686 / LMG 19005 / NCIMB 14063 / MR-1) protein is Putative 4-hydroxy-4-methyl-2-oxoglutarate aldolase.